Consider the following 504-residue polypeptide: One cut domain family member 2 (504 aa).

Disordered regions lie at residues Leu-29–Ala-95, Lys-166–Gly-189, Glu-274–Glu-332, and Trp-485–Ala-504. Over residues Pro-35 to Gly-56 the composition is skewed to gly residues. Positions His-168–Arg-186 are enriched in basic residues. The segment at residues Val-324–Ala-410 is a DNA-binding region (CUT). A DNA-binding region (homeobox) is located at residues Gln-426 to Trp-485. The segment covering Ser-490–Ala-504 has biased composition (low complexity).

It belongs to the CUT homeobox family.

It localises to the nucleus. Functionally, transcriptional activator. Activates the transcription of a number of liver genes such as HNF3B. The sequence is that of One cut domain family member 2 (ONECUT2) from Homo sapiens (Human).